Consider the following 430-residue polypeptide: NADH-quinone oxidoreductase subunit D 1 (430 aa).

Residues 1–36 (MSEAKGVGGIDPRATPGSAGAGERPPMGTVSRAGDG) are disordered.

Belongs to the complex I 49 kDa subunit family. As to quaternary structure, NDH-1 is composed of 14 different subunits. Subunits NuoB, C, D, E, F, and G constitute the peripheral sector of the complex.

Its subcellular location is the cell inner membrane. It carries out the reaction a quinone + NADH + 5 H(+)(in) = a quinol + NAD(+) + 4 H(+)(out). In terms of biological role, NDH-1 shuttles electrons from NADH, via FMN and iron-sulfur (Fe-S) centers, to quinones in the respiratory chain. The immediate electron acceptor for the enzyme in this species is believed to be ubiquinone. Couples the redox reaction to proton translocation (for every two electrons transferred, four hydrogen ions are translocated across the cytoplasmic membrane), and thus conserves the redox energy in a proton gradient. This Anaeromyxobacter dehalogenans (strain 2CP-C) protein is NADH-quinone oxidoreductase subunit D 1.